Reading from the N-terminus, the 262-residue chain is Versicolorin reductase 1 (262 aa).

Residues Ile-21, Asp-67, Asn-94, and Arg-127 each coordinate NADP(+). Active-site proton donor residues include Ser-143 and Ser-144. The NADP(+) site is built by Tyr-158, Lys-162, Ile-191, and Thr-193. Catalysis depends on Tyr-158, which acts as the Proton acceptor. The Lowers pKa of active site Tyr role is filled by Lys-162.

Belongs to the short-chain dehydrogenases/reductases (SDR) family.

It is found in the cytoplasm. Its subcellular location is the cytosol. It catalyses the reaction (4S,8R)-2,13,16,20-tetrahydroxy-7,9-dioxapentacyclo[10.8.0.0(3,10).0(4,8).0(14,19)]icosa-1(12),2,5,10,13,16,19-heptaen-18-one + NADPH + H(+) = (4S,8R,16R)-2,13,16,20-tetrahydroxy-7,9-dioxapentacyclo[10.8.0.0(3,10).0(4,8).0(14,19)]icosa-1(12),2,5,10,13,19-hexaen-18-one + NADP(+). It functions in the pathway mycotoxin biosynthesis; aflatoxin biosynthesis. In terms of biological role, cytochrome P450 monooxygenase; part of the gene cluster that mediates the biosynthesis of aflatoxins, a group of polyketide-derived furanocoumarins, and part of the most toxic and carcinogenic compounds among the known mycotoxins. The four major aflatoxins produced by A.parasiticus are aflatoxin B1 (AFB1), aflatoxin B2 (AFB2), aflatoxin G1 (AFG1) and aflatoxin G2 (AFG2). Within the aflatoxin pathway, with the cytochrome P450 monooxygenase aflN, the versicolorin reductase aflM, is involved in conversion of VERA to demethylsterigmatocystin (DMST). The biosynthesis of aflatoxins begins with the norsolorinic acid synthase aflC that combines a hexanoyl starter unit produced by the fatty acid synthase aflA/aflB and 7 malonyl-CoA extender units to synthesize the precursor NOR. The second step is the conversion of NOR to averantin and requires the norsolorinic acid ketoreductase aflD, which catalyzes the dehydration of norsolorinic acid to form (1'S)-averantin. The norsolorinic acid reductases aflE and aflF may also play a role in the conversion of NOR to AVN. The cytochrome P450 monooxygenase aflG then catalyzes the hydroxylation of AVN to 5'hydroxyaverantin (HAVN). The next step is performed by the 5'-hydroxyaverantin dehydrogenase aflH that transforms HAVN to 5'-oxoaverantin (OAVN) which is further converted to averufin (AVF) by aflK that plays a dual role in the pathway, as a 5'-oxoaverantin cyclase that mediates conversion of 5'-oxoaverantin, as well as a versicolorin B synthase in a later step in the pathway. The averufin oxidase aflI catalyzes the conversion of AVF to versiconal hemiacetal acetate (VHA). VHA is then the substrate for the versiconal hemiacetal acetate esterase aflJ to yield versiconal (VAL). Versicolorin B synthase aflK then converts VAL to versicolorin B (VERB) by closing the bisfuran ring of aflatoxin which is required for DNA-binding, thus giving to aflatoxin its activity as a mutagen. Then, the activity of the versicolorin B desaturase aflL leads to versicolorin A (VERA). A branch point starts from VERB since it can also be converted to dihydrodemethylsterigmatocystin (DMDHST), probably also by aflL, VERA being a precursor for aflatoxins B1 and G1, and DMDHST for aflatoxins B2 and G2. Next, the versicolorin reductase aflM and the cytochrome P450 monooxygenase aflN are involved in conversion of VERA to demethylsterigmatocystin (DMST). AflX and aflY seem also involved in this step, through probable aflX-mediated epoxide ring-opening step following versicolorin A oxidation and aflY-mediated Baeyer-Villiger oxidation required for the formation of the xanthone ring. The methyltransferase aflO then leads to the modification of DMST to sterigmatocystin (ST), and of DMDHST to dihydrosterigmatocystin (DHST). Both ST and DHST are then substrates of the O-methyltransferase aflP to yield O-methylsterigmatocystin (OMST) and dihydro-O-methylsterigmatocystin (DHOMST), respectively. Finally OMST is converted to aflatoxins B1 and G1, and DHOMST to aflatoxins B2 and G2, via the action of several enzymes including O-methylsterigmatocystin oxidoreductase aflQ, the cytochrome P450 monooxygenase aflU, but also the NADH-dependent flavin oxidoreductase nadA which is specifically required for the synthesis of AFG1. This Aspergillus parasiticus (strain ATCC 56775 / NRRL 5862 / SRRC 143 / SU-1) protein is Versicolorin reductase 1.